The sequence spans 171 residues: NADH-quinone oxidoreductase subunit B (171 aa).

[4Fe-4S] cluster contacts are provided by C39, C40, C105, and C134.

The protein belongs to the complex I 20 kDa subunit family. As to quaternary structure, NDH-1 is composed of 14 different subunits. Subunits NuoB, C, D, E, F, and G constitute the peripheral sector of the complex. Requires [4Fe-4S] cluster as cofactor.

It is found in the cell inner membrane. It carries out the reaction a quinone + NADH + 5 H(+)(in) = a quinol + NAD(+) + 4 H(+)(out). Its function is as follows. NDH-1 shuttles electrons from NADH, via FMN and iron-sulfur (Fe-S) centers, to quinones in the respiratory chain. The immediate electron acceptor for the enzyme in this species is believed to be ubiquinone. Couples the redox reaction to proton translocation (for every two electrons transferred, four hydrogen ions are translocated across the cytoplasmic membrane), and thus conserves the redox energy in a proton gradient. The polypeptide is NADH-quinone oxidoreductase subunit B (Aliarcobacter butzleri (strain RM4018) (Arcobacter butzleri)).